The sequence spans 192 residues: Thymidylate kinase (192 aa).

7–14 (GIDCVGKS) serves as a coordination point for ATP.

The protein belongs to the thymidylate kinase family.

The catalysed reaction is dTMP + ATP = dTDP + ADP. Phosphorylation of dTMP to form dTDP in both de novo and salvage pathways of dTTP synthesis. In Campylobacter jejuni subsp. jejuni serotype O:6 (strain 81116 / NCTC 11828), this protein is Thymidylate kinase.